Here is a 61-residue protein sequence, read N- to C-terminus: Temporin-SN2 (61 aa).

A signal peptide spans 1–22 (MFTLKKTLLLLFFLGTINLSLC). Residues 23-44 (EEERNAEEERRDGDDEMDVEVK) constitute a propeptide, removed in mature form. A Lysine amide modification is found at Lys-61.

Belongs to the frog skin active peptide (FSAP) family. Temporin subfamily. As to expression, expressed by the skin glands.

The protein resides in the secreted. Its function is as follows. Antimicrobial peptide. Active against some Gram-positive and Gram-negative bacterial strains. Active against fungus C.glabrata 090902 but not against C.albicans ATCC 12231. Shows very weak hemolytic activity against human erythrocytes. This chain is Temporin-SN2, found in Sylvirana spinulosa (Fine-spined frog).